The chain runs to 697 residues: DNA ligase (697 aa).

NAD(+) contacts are provided by residues 36-40 (DAEYD), 85-86 (SL), and Glu-123. The active-site N6-AMP-lysine intermediate is the Lys-125. 4 residues coordinate NAD(+): Arg-146, Glu-182, Lys-320, and Lys-344. The Zn(2+) site is built by Cys-438, Cys-441, Cys-456, and Cys-462. In terms of domain architecture, BRCT spans 619-697 (PQGNTLAGKT…EDGLKALLGV (79 aa)).

This sequence belongs to the NAD-dependent DNA ligase family. LigA subfamily. The cofactor is Mg(2+). It depends on Mn(2+) as a cofactor.

It catalyses the reaction NAD(+) + (deoxyribonucleotide)n-3'-hydroxyl + 5'-phospho-(deoxyribonucleotide)m = (deoxyribonucleotide)n+m + AMP + beta-nicotinamide D-nucleotide.. In terms of biological role, DNA ligase that catalyzes the formation of phosphodiester linkages between 5'-phosphoryl and 3'-hydroxyl groups in double-stranded DNA using NAD as a coenzyme and as the energy source for the reaction. It is essential for DNA replication and repair of damaged DNA. This Bordetella petrii (strain ATCC BAA-461 / DSM 12804 / CCUG 43448) protein is DNA ligase.